A 555-amino-acid chain; its full sequence is Formate--tetrahydrofolate ligase (555 aa).

64 to 71 lines the ATP pocket; sequence TPAGEGKT.

Belongs to the formate--tetrahydrofolate ligase family.

The enzyme catalyses (6S)-5,6,7,8-tetrahydrofolate + formate + ATP = (6R)-10-formyltetrahydrofolate + ADP + phosphate. It functions in the pathway one-carbon metabolism; tetrahydrofolate interconversion. The polypeptide is Formate--tetrahydrofolate ligase (Dinoroseobacter shibae (strain DSM 16493 / NCIMB 14021 / DFL 12)).